The chain runs to 557 residues: MVRITCTISFSTDDEPVGRSRQGSFDDHYKRVVWSKDGEQGKYQEEGDDPDAYDGPEDEEAPDISLATFFGGCSLHGANHVFVEDKKFSIRQGLWALVFLLAISMFLLQVVDRVIYYLQYDYVTLLDERNAKNMTFPAITLCNYNTFRRSQLSYSDLLFMGPLLGYEDNMAPGIPLAPEPDRQGSRFSLAEFFNRTRHRMDDMLLECNFAGKECGAEHWREIFTRYGKCYTFNSGQDGRPLLITTKGGMGNGLEIMLDIQQDEYLPVWGETDETTFEAGIKVQIHTQDEPPFIDQLGFGVAPGFQTFVSCQEQRLTYLPPPWGDCKATPIDSDFFNTYSITACRIDCETRYLVENCNCRMVHMPGDAPYCTPEQYKECADPALDFLVERDNDYCVCETPCNMTRYGKELSFVRIPSKASAKYLAKKYNKTEQYISDNIMVLDIFFEALNYETIEQKKAYELAGLLGDIGGQMGLFIGASILTILELFDYLYEVIKFKLCRCAKKKHQRSNNNERGAVLSLDDVKRHAPCDNLRTPSTYPANMLPHHPGQGNFEDFTC.

At 1–98 the chain is on the cytoplasmic side; sequence MVRITCTISF…SIRQGLWALV (98 aa). A compositionally biased stretch (basic and acidic residues) spans 36 to 45; the sequence is KDGEQGKYQE. The interval 36 to 57 is disordered; the sequence is KDGEQGKYQEEGDDPDAYDGPE. Over residues 46 to 57 the composition is skewed to acidic residues; it reads EGDDPDAYDGPE. The helical transmembrane segment at 99–115 threads the bilayer; that stretch reads FLLAISMFLLQVVDRVI. Residues 116–460 lie on the Extracellular side of the membrane; the sequence is YYLQYDYVTL…ETIEQKKAYE (345 aa). N-linked (GlcNAc...) asparagine glycans are attached at residues Asn133 and Asn194. 7 disulfide bridges follow: Cys142-Cys229, Cys207-Cys214, Cys325-Cys400, Cys343-Cys396, Cys347-Cys394, Cys356-Cys378, and Cys358-Cys370. 2 N-linked (GlcNAc...) asparagine glycosylation sites follow: Asn401 and Asn428. A discontinuously helical transmembrane segment spans residues 461-491; sequence LAGLLGDIGGQMGLFIGASILTILELFDYLY. Positions 477–479 match the GAS motif; ion selectivity filter motif; the sequence is GAS. At 492–557 the chain is on the cytoplasmic side; it reads EVIKFKLCRC…GQGNFEDFTC (66 aa).

The protein belongs to the amiloride-sensitive sodium channel (TC 1.A.6) family. ASIC1 subfamily. As to quaternary structure, homotrimer. Heterotrimer; with other ASIC proteins producing channel with different properties. As to expression, expressed in central nervous system.

The protein localises to the cell membrane. Its subcellular location is the postsynaptic cell membrane. The protein resides in the cell projection. It is found in the dendrite. It carries out the reaction Na(+)(in) = Na(+)(out). The enzyme catalyses K(+)(in) = K(+)(out). It catalyses the reaction Li(+)(in) = Li(+)(out). The catalysed reaction is Ca(2+)(in) = Ca(2+)(out). Its activity is regulated as follows. Inhibited by the diuretic drug amiloride. Forms voltage-independent, pH-gated trimeric sodium channels that act as postsynaptic excitatory receptors in the nervous system, playing a crucial role in regulating synaptic plasticity, learning, and memory. Upon extracellular pH drop this channel elicits transient, fast activating, and completely desensitizing inward currents. Displays high selectivity for sodium ions but can also permit the permeation of other cations. The protein is Acid-sensing ion channel 1B (asic1b) of Danio rerio (Zebrafish).